A 157-amino-acid polypeptide reads, in one-letter code: DNA-binding protein MNB1B (157 aa).

Disordered stretches follow at residues Met-1 to Pro-45, Phe-59 to Asp-87, and Tyr-109 to Glu-157. 2 stretches are compositionally biased toward basic and acidic residues: residues Ala-10–Ala-27 and Ala-76–Asp-87. A DNA-binding region (HMG box) is located at residues Pro-41–Asn-110. 2 stretches are compositionally biased toward acidic residues: residues Glu-124–Ser-133 and Asn-141–Glu-157. Ser-149 is subject to Phosphoserine; by CK2.

In terms of tissue distribution, expressed in all tissues examined.

The protein resides in the nucleus. Recognizes an AAGG motif at the MNF1-binding site. This Zea mays (Maize) protein is DNA-binding protein MNB1B (MNB1B).